We begin with the raw amino-acid sequence, 223 residues long: Sigma non-opioid intracellular receptor 1 (223 aa).

Over 1–7 (MAVLSSR) the chain is Lumenal. The helical transmembrane segment at 8–29 (AMRAALGLAVLAVVIQLLRTWL) threads the bilayer. At 30 to 223 (SSKSYLFNQK…HTYLSELGLS (194 aa)) the chain is on the cytoplasmic side. The important for ligand-binding stretch occupies residues 98-105 (SLTEYILL). The tract at residues 176–223 (FIPSTMGFALADTIFSTQDFCTLFYTFRIYARCLLLETHTYLSELGLS) is C-terminal hydrophobic region.

The protein belongs to the ERG2 family. As to quaternary structure, homotrimer.

Its subcellular location is the nucleus inner membrane. It is found in the nucleus outer membrane. The protein resides in the nucleus envelope. It localises to the cytoplasmic vesicle. The protein localises to the endoplasmic reticulum membrane. Its subcellular location is the membrane. May function in lipid transport from the endoplasmic reticulum and be involved in a wide array of cellular functions probably through regulation of the biogenesis of lipid microdomains at the plasma membrane. May regulate calcium efflux at the endoplasmic reticulum. In Taricha granulosa (Roughskin newt), this protein is Sigma non-opioid intracellular receptor 1 (SIGMAR1).